A 369-amino-acid polypeptide reads, in one-letter code: Anhydro-N-acetylmuramic acid kinase (369 aa).

ATP is bound at residue 12-19 (GTSMDGVD).

This sequence belongs to the anhydro-N-acetylmuramic acid kinase family.

The enzyme catalyses 1,6-anhydro-N-acetyl-beta-muramate + ATP + H2O = N-acetyl-D-muramate 6-phosphate + ADP + H(+). The protein operates within amino-sugar metabolism; 1,6-anhydro-N-acetylmuramate degradation. It participates in cell wall biogenesis; peptidoglycan recycling. Catalyzes the specific phosphorylation of 1,6-anhydro-N-acetylmuramic acid (anhMurNAc) with the simultaneous cleavage of the 1,6-anhydro ring, generating MurNAc-6-P. Is required for the utilization of anhMurNAc either imported from the medium or derived from its own cell wall murein, and thus plays a role in cell wall recycling. This is Anhydro-N-acetylmuramic acid kinase from Shewanella sp. (strain ANA-3).